A 296-amino-acid polypeptide reads, in one-letter code: Enoyl-CoA hydratase domain-containing protein 2, mitochondrial (296 aa).

The residue at position 101 (K101) is an N6-acetyllysine; alternate. K101 is subject to N6-succinyllysine; alternate.

This sequence belongs to the enoyl-CoA hydratase/isomerase family.

It is found in the mitochondrion. The chain is Enoyl-CoA hydratase domain-containing protein 2, mitochondrial (ECHDC2) from Bos taurus (Bovine).